Consider the following 174-residue polypeptide: Large ribosomal subunit protein uL10 (174 aa).

The protein belongs to the universal ribosomal protein uL10 family. As to quaternary structure, part of the ribosomal stalk of the 50S ribosomal subunit. The N-terminus interacts with L11 and the large rRNA to form the base of the stalk. The C-terminus forms an elongated spine to which L12 dimers bind in a sequential fashion forming a multimeric L10(L12)X complex.

Its function is as follows. Forms part of the ribosomal stalk, playing a central role in the interaction of the ribosome with GTP-bound translation factors. The sequence is that of Large ribosomal subunit protein uL10 from Geobacter sulfurreducens (strain ATCC 51573 / DSM 12127 / PCA).